A 1181-amino-acid chain; its full sequence is MIIFWKGENDLSENFDRIRISLASPEQIRSWSSGEVKKPETINYRTLRPEKEGLFCEKIFGPVKDWECHCGKYKRVRHKGIVCDRCGVEVTTSKVRRERMGHIELAAPVCHIWYLKGIPSRMGLLLDMSPKVLEKVIYFVSYIVLDPGDTPLLKKQLLNEREYRENRDRYGEAFKAGIGAEAVKSLLYEVELDKMSSDLKEEIATTTGQRKSRAIKRLEVVESFRLSGNDPMWMILDVLPVIPPDLRPMVQLDGGRFATSDLNDLYRRVINRNNRLKRLLDLGAPDIIVRNEKRMLQEAVDALVDNGRRGRPVTGPGNRPLKSLSDMLKGKQGRFRQNLLGKRVDYSGRSVIVVGPNLKMHQCGLPKEMALELFKPFVMKKLVDKAIASNIKSAKKMVERGREEVWDILDDVIKEHPVLLNRAPTLHRLGIQAFEPVLVEGRALQLHPLVCTAYNADFDGDQMAVHVPLSAEAQTEARLLMLASNNILNPKDGKPVVTPTQDMVIGLYYLTFISAEAFSKENPRAFSSTDEARMAFELGQIDLHEKIRVKMSVPQKTGREILKSHEAQTFLEEIVDTSVGRIIFNDAIPTSLGFYNEIIDKKKLGNIVYECYRLEGNARTADMLDSLKSLGYEFSTRAGITVGVTDFETPLAKYDILQEADQEVEAIERDYEVGLITDEERHAQVVEIWNQATDDVTEVLKNSLSEDNPVYMMATSGARGNFQQIRQLAGMRGLMADPSGKIIDLPIKANFREGLTVLEYFISTHGARKGLADTALRTADSGYLTRRLVDVSQDVIVREDDCESVEGIWVGRIMEGSQLIEPLHQRIIGRVSVDTVIHPDTGEILVEENQMIDDDIGYEIERAGIEKVKIRSVLTCKTRHGVCKKCYGRNLATGYNVEIGEAVGILAAQSIGEPGTQLTMRTFHTGGVAGDDITRGLPRVEELFEVRKPKGQAVVVEVNGKVRFGENKGRREVEVLGENGEVLGTYPVHYGSRLKFEEGTEVEIGDALTEGPLNPHDILKTKGLQEVQRYLLQEVQKVYRSQGVDISDKHIEIMIRQMLKKVKIEDPGDTSLLPGAFVDISSFEDENNREIRAGGLPATCSPMLLGITKASLNTDSFLSAASFQETTKVLTEAAIKGKIDHLIGLKENVIIGKLIPAGTGYSAYRETSISEAPESENMVSD.

4 residues coordinate Zn(2+): C68, C70, C83, and C86. Mg(2+) is bound by residues D457, D459, and D461. C802, C876, C883, and C886 together coordinate Zn(2+).

This sequence belongs to the RNA polymerase beta' chain family. In terms of assembly, the RNAP catalytic core consists of 2 alpha, 1 beta, 1 beta' and 1 omega subunit. When a sigma factor is associated with the core the holoenzyme is formed, which can initiate transcription. It depends on Mg(2+) as a cofactor. Zn(2+) serves as cofactor.

It catalyses the reaction RNA(n) + a ribonucleoside 5'-triphosphate = RNA(n+1) + diphosphate. Its function is as follows. DNA-dependent RNA polymerase catalyzes the transcription of DNA into RNA using the four ribonucleoside triphosphates as substrates. The sequence is that of DNA-directed RNA polymerase subunit beta' from Syntrophomonas wolfei subsp. wolfei (strain DSM 2245B / Goettingen).